Consider the following 406-residue polypeptide: Prisilkin-39 (406 aa).

The first 19 residues, 1 to 19 (MKGFLTLLLVCAILSTGYC), serve as a signal peptide directing secretion. Helical transmembrane passes span 26 to 48 (ALTG…GAGA) and 58 to 80 (VGVG…YGGY). Residues 78-197 (GGYSGYGYGY…YSGYSYGYPT (120 aa)) are 10 X 12 AA tandem repeat of G-G-Y-[SG]-G-Y-[GS]-Y-G-Y-P-[AT].

In terms of tissue distribution, expression is confined to the prism and organic layers of the shell with no expression detected in the nacreous shell layer. Also expressed in the mantle edge, extrapallial fluid, hemolymph and, to a lesser extent, in the viscus (at protein level). In the mantle, localizes to inner epithelial cells of the outer fold and the outer epithelial cells of the middle fold at the bottom of the periostracal groove.

Its subcellular location is the membrane. Its function is as follows. Binds chitin and may serve as a framework constituent participating in shell formation. Inhibits aragonite precipitation and may regulate aragonite growth during shell layer formation. Does not affect calcite crystallization. In Pinctada fucata (Akoya pearl oyster), this protein is Prisilkin-39.